The following is a 494-amino-acid chain: Aspartyl/glutamyl-tRNA(Asn/Gln) amidotransferase subunit B (494 aa).

It belongs to the GatB/GatE family. GatB subfamily. In terms of assembly, heterotrimer of A, B and C subunits.

It catalyses the reaction L-glutamyl-tRNA(Gln) + L-glutamine + ATP + H2O = L-glutaminyl-tRNA(Gln) + L-glutamate + ADP + phosphate + H(+). The enzyme catalyses L-aspartyl-tRNA(Asn) + L-glutamine + ATP + H2O = L-asparaginyl-tRNA(Asn) + L-glutamate + ADP + phosphate + 2 H(+). Allows the formation of correctly charged Asn-tRNA(Asn) or Gln-tRNA(Gln) through the transamidation of misacylated Asp-tRNA(Asn) or Glu-tRNA(Gln) in organisms which lack either or both of asparaginyl-tRNA or glutaminyl-tRNA synthetases. The reaction takes place in the presence of glutamine and ATP through an activated phospho-Asp-tRNA(Asn) or phospho-Glu-tRNA(Gln). The chain is Aspartyl/glutamyl-tRNA(Asn/Gln) amidotransferase subunit B from Trichodesmium erythraeum (strain IMS101).